Reading from the N-terminus, the 594-residue chain is MHEHLKEKLAILPDQPGCYLMKDKQGTVIYVGKAKVLKNRVRSYFTGSHDGKTLRLVGEIVDFEYIVTSSNLEALILELNLIKKHDPKYNIQLKDDKTYPFIKITAEKQPRLLITRNVKKDKGKYFGPYPNAQSAHETKKLLDRMYPLRKCSNMPDKVCLYYHMGQCLAPCVKEVTEEQNKEIVDEIIKFLNGGHKEVRSELETKMYEASEKLEFERAKELRDQIAHIDAIMEKQKMIMSDLVDRDVFGYAVDKGWMCVQVFFVRKGKLIERDVSMFPIYDEPEEGFLTFIGQFYENSSHFKPKEIVVPGSIDSELVERFLEVEATQPKRGKKKDLVELANKNAKIALEEKFYLIERDEERTIKAVENLGEQLGIETPYRIEAFDNSNIQGTNPVSAMIAFIDGKPAKKEYRKYKIKTVQGPDDYESMREVVRRRYTRALKEGLPLPDLIIIDGGKGHLAAASDVLENELGLYIPMAGLVKDDKHKTSHLIIGDPPEPVMLERNSQEFYLLQRIQDEVHRFAITFHRQLHGKSVIQSALDDIPGIGDKRKKILLKHFGSLKKMKEASVTEFVEAGMPKNVAETIYSYLADKKTL.

The GIY-YIG domain maps to 14–91 (DQPGCYLMKD…IKKHDPKYNI (78 aa)). One can recognise a UVR domain in the interval 196–231 (KEVRSELETKMYEASEKLEFERAKELRDQIAHIDAI).

This sequence belongs to the UvrC family. In terms of assembly, interacts with UvrB in an incision complex.

It localises to the cytoplasm. The UvrABC repair system catalyzes the recognition and processing of DNA lesions. UvrC both incises the 5' and 3' sides of the lesion. The N-terminal half is responsible for the 3' incision and the C-terminal half is responsible for the 5' incision. This chain is UvrABC system protein C, found in Bacillus cereus (strain Q1).